A 221-amino-acid polypeptide reads, in one-letter code: GTP cyclohydrolase 1 (221 aa).

Residues Cys109, His112, and Cys180 each coordinate Zn(2+).

The protein belongs to the GTP cyclohydrolase I family. Toroid-shaped homodecamer, composed of two pentamers of five dimers.

The enzyme catalyses GTP + H2O = 7,8-dihydroneopterin 3'-triphosphate + formate + H(+). Its pathway is cofactor biosynthesis; 7,8-dihydroneopterin triphosphate biosynthesis; 7,8-dihydroneopterin triphosphate from GTP: step 1/1. This chain is GTP cyclohydrolase 1, found in Serratia proteamaculans (strain 568).